Consider the following 272-residue polypeptide: GPN-loop GTPase 3 (272 aa).

A GTP-binding site is contributed by 12–17 (GAGKST). Residues 69-71 (GPN) carry the Gly-Pro-Asn (GPN)-loop; involved in dimer interface motif. Residue 172–175 (SKMD) coordinates GTP. Positions 253 to 272 (QYGEDEEPKVPKDMDDGDFD) are disordered.

The protein belongs to the GPN-loop GTPase family. Heterodimers with GPN1 or GPN2. Binds to RNA polymerase II (RNAPII).

Functionally, small GTPase required for proper nuclear import of RNA polymerase II and III (RNAPII and RNAPIII). May act at an RNAP assembly step prior to nuclear import. The chain is GPN-loop GTPase 3 from Cryptococcus neoformans var. neoformans serotype D (strain JEC21 / ATCC MYA-565) (Filobasidiella neoformans).